The sequence spans 342 residues: MQNPFVPQLVYIEPRALEYPLGQELQDKFENMGIEIRETTSHNQVRNIPGKNHLQQYRNAKSTLVIGVRKTLKFDSSKPSAEYAIPFATGCMGHCHYCYLQTTMGSKPYIRTYVNVEEILDQADKYMKERAPEFTRFEASCTSDIVGIDHLTHTLKRAIEHFGQSDLGKLRFVTKFHHVDHLLDAKHNGKTRFRFSINADYVIKNFEPGTSPLDKRIEAAVKVAKAGYPLGFIVAPIYIHEGWEEGYRHLFEKLDAALPQDVRHDITFELIQHRFTKPAKRVIEKNYPKTKLELDEEKRRYKWGRYGIGKYIYQKDEEHALREALESYIDTFFPNAKIEYFT.

The 229-residue stretch at 77–305 (SKPSAEYAIP…EEKRRYKWGR (229 aa)) folds into the Radical SAM core domain. [4Fe-4S] cluster-binding residues include Cys91, Cys95, and Cys98. Positions 218–235 (EAAVKVAKAGYPLGFIVA) form a DNA-binding region, H-T-H motif.

Belongs to the radical SAM superfamily. SPL family. In terms of assembly, monomer or homodimer. [4Fe-4S] cluster is required as a cofactor. The cofactor is S-adenosyl-L-methionine.

It carries out the reaction (5R)-5,6-dihydro-5-(thymidin-7-yl)thymidine in DNA = a thymidine dimer in DNA. Involved in repair of UV radiation-induced DNA damage during spore germination. Can repair thymine dimer 5-thyminyl-5,6-dihydrothymine (known as spore photoproduct (SP)) by in situ monomerization of SP to two thymines. The polypeptide is Spore photoproduct lyase (splB) (Bacillus subtilis (strain 168)).